Here is a 191-residue protein sequence, read N- to C-terminus: Elongation factor P-like protein (191 aa).

This sequence belongs to the elongation factor P family.

The sequence is that of Elongation factor P-like protein from Photobacterium profundum (strain SS9).